The chain runs to 946 residues: Bifunctional glutamine synthetase adenylyltransferase/adenylyl-removing enzyme (946 aa).

The interval 1–440 is adenylyl removase; the sequence is MKPLSSPLQQ…VFNELIGDDE (440 aa). Residues 449 to 946 are adenylyl transferase; the sequence is SEQWRELWQD…VSWQKWLVEE (498 aa).

This sequence belongs to the GlnE family. It depends on Mg(2+) as a cofactor.

It catalyses the reaction [glutamine synthetase]-O(4)-(5'-adenylyl)-L-tyrosine + phosphate = [glutamine synthetase]-L-tyrosine + ADP. The enzyme catalyses [glutamine synthetase]-L-tyrosine + ATP = [glutamine synthetase]-O(4)-(5'-adenylyl)-L-tyrosine + diphosphate. Functionally, involved in the regulation of glutamine synthetase GlnA, a key enzyme in the process to assimilate ammonia. When cellular nitrogen levels are high, the C-terminal adenylyl transferase (AT) inactivates GlnA by covalent transfer of an adenylyl group from ATP to specific tyrosine residue of GlnA, thus reducing its activity. Conversely, when nitrogen levels are low, the N-terminal adenylyl removase (AR) activates GlnA by removing the adenylyl group by phosphorolysis, increasing its activity. The regulatory region of GlnE binds the signal transduction protein PII (GlnB) which indicates the nitrogen status of the cell. In Escherichia coli (strain SMS-3-5 / SECEC), this protein is Bifunctional glutamine synthetase adenylyltransferase/adenylyl-removing enzyme.